Here is an 801-residue protein sequence, read N- to C-terminus: Probable inorganic carbon transporter subunit DabA (801 aa).

4 residues coordinate Zn(2+): Cys298, Asp300, His481, and Cys496. Residues 575–596 form a disordered region; that stretch reads RENAAAERAESMGSDASSGVSE.

It belongs to the inorganic carbon transporter (TC 9.A.2) DabA family. Forms a complex with DabB. Zn(2+) serves as cofactor.

Its subcellular location is the cell membrane. In terms of biological role, part of an energy-coupled inorganic carbon pump. This Haloarcula marismortui (strain ATCC 43049 / DSM 3752 / JCM 8966 / VKM B-1809) (Halobacterium marismortui) protein is Probable inorganic carbon transporter subunit DabA.